Reading from the N-terminus, the 207-residue chain is LPS-assembly lipoprotein LptE (207 aa).

The first 19 residues, 1 to 19 (MRHRILMLLLGLAVLVTAG), serve as a signal peptide directing secretion. The N-palmitoyl cysteine moiety is linked to residue Cys20. Residue Cys20 is the site of S-diacylglycerol cysteine attachment.

It belongs to the LptE lipoprotein family. Component of the lipopolysaccharide transport and assembly complex. Interacts with LptD.

The protein resides in the cell outer membrane. In terms of biological role, together with LptD, is involved in the assembly of lipopolysaccharide (LPS) at the surface of the outer membrane. Required for the proper assembly of LptD. Binds LPS and may serve as the LPS recognition site at the outer membrane. The polypeptide is LPS-assembly lipoprotein LptE (Yersinia enterocolitica serotype O:8 / biotype 1B (strain NCTC 13174 / 8081)).